Reading from the N-terminus, the 50-residue chain is Fungus-induced-related protein 15 (50 aa).

A signal peptide spans Met1–Gly21.

In terms of biological role, may have role in hypoxia response. In Caenorhabditis elegans, this protein is Fungus-induced-related protein 15 (fipr-15).